A 164-amino-acid polypeptide reads, in one-letter code: Respiratory growth induced protein 2 (164 aa).

It belongs to the RGI1 family.

Its subcellular location is the cytoplasm. Involved in the control of energetic metabolism and significantly contribute to cell fitness, especially under respiratory growth conditions. The protein is Respiratory growth induced protein 2 (RGI2) of Saccharomyces cerevisiae (strain JAY291) (Baker's yeast).